A 475-amino-acid polypeptide reads, in one-letter code: MNTVLAQQIANEGGVEAWMIAQQHKSLLRFLTCGSVDDGKSTLIGRLLHDTRQIYEDQLSSLHNDSKRHGTQGEKLDLALLVDGLQAEREQGITIDVAYRYFSTEKRKFIIADTPGHEQYTRNMATGASTCELAILLIDARKGVLDQTRRHSFISTLLGIKHLVVAINKMDLVDYSEETFTRIREDYLTFAGQLPGNLDIRFVPLSALEGDNVASQSESMPWYSGLTLLEVLETVEIQRVVNAQPMRFPVQYVNRPNLDFRGYAGMLASGRVEVGQRVKVLPSGVESNVARIVTFDGDREEVFAGEAITLVLTDEIDISRGDLLLAADEALPAVQSASVDVVWMAEQPLSPGQSYDIKIAGKKTRARVDGIRYQVDINNLTQREVENLPLNGIGLVDLTFDEPLVLDRYQQNPVTGGLIFIDRLSNVTVGAGMVHEPVSQATAASSEFSAFELELNALVRRHFPHWGARDLLGDK.

The region spanning 25-239 (KSLLRFLTCG…EVLETVEIQR (215 aa)) is the tr-type G domain. Residues 34-41 (GSVDDGKS) form a G1 region. Position 34-41 (34-41 (GSVDDGKS)) interacts with GTP. A G2 region spans residues 92–96 (GITID). Residues 113-116 (DTPG) are G3. Residues 113-117 (DTPGH) and 168-171 (NKMD) each bind GTP. The segment at 168-171 (NKMD) is G4. The segment at 206-208 (SAL) is G5.

It belongs to the TRAFAC class translation factor GTPase superfamily. Classic translation factor GTPase family. CysN/NodQ subfamily. As to quaternary structure, heterodimer composed of CysD, the smaller subunit, and CysN.

It carries out the reaction sulfate + ATP + H(+) = adenosine 5'-phosphosulfate + diphosphate. It participates in sulfur metabolism; hydrogen sulfide biosynthesis; sulfite from sulfate: step 1/3. With CysD forms the ATP sulfurylase (ATPS) that catalyzes the adenylation of sulfate producing adenosine 5'-phosphosulfate (APS) and diphosphate, the first enzymatic step in sulfur assimilation pathway. APS synthesis involves the formation of a high-energy phosphoric-sulfuric acid anhydride bond driven by GTP hydrolysis by CysN coupled to ATP hydrolysis by CysD. This chain is Sulfate adenylyltransferase subunit 1, found in Shigella flexneri serotype 5b (strain 8401).